Reading from the N-terminus, the 416-residue chain is tRNA(Met) cytidine acetate ligase (416 aa).

Residues 7–20 (VVEYNPFHNGHLHH), Gly101, Asn162, and 187–188 (RI) each bind ATP.

Belongs to the TmcAL family.

The protein localises to the cytoplasm. It catalyses the reaction cytidine(34) in elongator tRNA(Met) + acetate + ATP = N(4)-acetylcytidine(34) in elongator tRNA(Met) + AMP + diphosphate. Catalyzes the formation of N(4)-acetylcytidine (ac(4)C) at the wobble position of elongator tRNA(Met), using acetate and ATP as substrates. First activates an acetate ion to form acetyladenylate (Ac-AMP) and then transfers the acetyl group to tRNA to form ac(4)C34. This chain is tRNA(Met) cytidine acetate ligase, found in Halalkalibacterium halodurans (strain ATCC BAA-125 / DSM 18197 / FERM 7344 / JCM 9153 / C-125) (Bacillus halodurans).